The following is a 114-amino-acid chain: MSDDVALPLEFTEAAANKVKHLIADEDNPNLKLRVYITGGGCSGFQYGFTFDDQVNEGDMTIEKQGVGLVVDPMSLQYLVGGAVDYTEGLEGSRFIVTNPNAKSTCGCGSSFSV.

Cys42, Cys106, and Cys108 together coordinate iron-sulfur cluster.

It belongs to the HesB/IscA family. In terms of assembly, homodimer. Requires iron-sulfur cluster as cofactor.

Required for insertion of 4Fe-4S clusters for at least IspG. The chain is Iron-sulfur cluster insertion protein ErpA from Klebsiella pneumoniae (strain 342).